A 163-amino-acid chain; its full sequence is Phosphopantetheine adenylyltransferase (163 aa).

A substrate-binding site is contributed by S11. ATP contacts are provided by residues 11 to 12 (SF) and H19. Residues K43, L75, and R89 each coordinate substrate. ATP contacts are provided by residues 90-92 (GLR), E100, and 125-131 (FGYLSSS).

The protein belongs to the bacterial CoaD family. In terms of assembly, homohexamer. Mg(2+) is required as a cofactor.

It localises to the cytoplasm. It carries out the reaction (R)-4'-phosphopantetheine + ATP + H(+) = 3'-dephospho-CoA + diphosphate. It functions in the pathway cofactor biosynthesis; coenzyme A biosynthesis; CoA from (R)-pantothenate: step 4/5. Its function is as follows. Reversibly transfers an adenylyl group from ATP to 4'-phosphopantetheine, yielding dephospho-CoA (dPCoA) and pyrophosphate. This chain is Phosphopantetheine adenylyltransferase, found in Geobacter metallireducens (strain ATCC 53774 / DSM 7210 / GS-15).